We begin with the raw amino-acid sequence, 170 residues long: Prenyl-diphosphate phosphatase (170 aa).

Positions 25–155 (HIHRASQLIL…PGNYTPALRE (131 aa)) constitute a Nudix hydrolase domain. Residues 59–83 (YSVSGTVADESYEACIAREMLEEIG) carry the Nudix box motif. 2 residues coordinate Mg(2+): Glu-77 and Glu-81.

Belongs to the Nudix hydrolase family. Mg(2+) serves as cofactor.

It carries out the reaction dimethylallyl diphosphate + H2O = dimethylallyl phosphate + phosphate + H(+). The catalysed reaction is isopentenyl diphosphate + H2O = isopentenyl phosphate + phosphate + H(+). The enzyme catalyses (2E,6E)-farnesyl diphosphate + H2O = (2E,6E)-farnesyl phosphate + phosphate + H(+). It catalyses the reaction (2E)-geranyl diphosphate + H2O = (2E)-geranyl phosphate + phosphate + H(+). Its pathway is isoprenoid biosynthesis. Hydrolyzes homoallylic isopentenyl diphosphate (IPP), its allylic isomer dimethylallyl diphosphate (DMAPP) and short-chain prenyl diphosphates geranyl diphosphate (GPP) and farnesyl diphosphate (FPP) to their corresponding monophosphate forms with high activity. The preferred substrate is IPP. ADP, NADPH, Ap5A and thiamine diphosphate (TPP) are weakly hydrolyzed. No hydrolysis with ATP, dNTPs, 8-OH-dGTP, NAD+, FAD or acetyl-CoA. The likely physiological role of this enzyme is to provide a substrate dimethylallyl phosphate (DMAP) for prenylated flavin mononucleotide (prenyl-FMN) synthase MM_1871 involved in the biosynthesis of prenyl-FMN, a coenzyme required in the archaea-specific mevalonate pathway. The protein is Prenyl-diphosphate phosphatase of Methanosarcina mazei (strain ATCC BAA-159 / DSM 3647 / Goe1 / Go1 / JCM 11833 / OCM 88) (Methanosarcina frisia).